A 149-amino-acid polypeptide reads, in one-letter code: MESLYRIPFTVLECPNLKLKKPSWLHMPSAMTVYAMVVVSYFLITGGIIYDVIVEPPSVGSMTDEHGHQRPVAFLAYRVNGQYIMEGLASSFLFTMGGLGFIILDRSNAPNIPKLNRFLLLFIGFVCVLLSFFMARVFMRMKLPGYLMG.

Residues 1–32 (MESLYRIPFTVLECPNLKLKKPSWLHMPSAMT) are Cytoplasmic-facing. A helical membrane pass occupies residues 33 to 53 (VYAMVVVSYFLITGGIIYDVI). At 54–83 (VEPPSVGSMTDEHGHQRPVAFLAYRVNGQY) the chain is on the extracellular side. Residues 84–104 (IMEGLASSFLFTMGGLGFIIL) traverse the membrane as a helical segment. Topologically, residues 105–117 (DRSNAPNIPKLNR) are cytoplasmic. A helical transmembrane segment spans residues 118-138 (FLLLFIGFVCVLLSFFMARVF). The Extracellular segment spans residues 139–149 (MRMKLPGYLMG).

The protein belongs to the OSTC family. Specific component of the STT3A-containing form of the oligosaccharyltransferase (OST) complex.

Its subcellular location is the membrane. The protein operates within protein modification; protein glycosylation. Specific component of the STT3A-containing form of the oligosaccharyl transferase (OST) complex that catalyzes the initial transfer of a defined glycan (Glc(3)Man(9)GlcNAc(2) in eukaryotes) from the lipid carrier dolichol-pyrophosphate to an asparagine residue within an Asn-X-Ser/Thr consensus motif in nascent polypeptide chains, the first step in protein N-glycosylation. N-glycosylation occurs cotranslationally and the complex associates with the Sec61 complex at the channel-forming translocon complex that mediates protein translocation across the endoplasmic reticulum (ER). All subunits are required for a maximal enzyme activity. The polypeptide is Oligosaccharyltransferase complex subunit ostc-B (Xenopus laevis (African clawed frog)).